Here is a 78-residue protein sequence, read N- to C-terminus: MKLTCMMIVAVLFLTAWTFVTADSRNGLEYLFPKAHYEMNPEASKLNKKRDCVAGGHFCGFPKIGGPCCSGWCFFVCA.

The N-terminal stretch at 1-22 is a signal peptide; the sequence is MKLTCMMIVAVLFLTAWTFVTA. Residues 23–48 constitute a propeptide that is removed on maturation; that stretch reads DSRNGLEYLFPKAHYEMNPEASKLNK. Intrachain disulfides connect Cys-52–Cys-69, Cys-59–Cys-73, and Cys-68–Cys-77.

This sequence belongs to the conotoxin O1 superfamily. In terms of tissue distribution, expressed by the venom duct.

The protein localises to the secreted. Omega-conotoxins act at presynaptic membranes, they bind and block voltage-gated calcium channels (Cav). The polypeptide is Omega-conotoxin-like VnMKLT1-0111 (Conus ventricosus (Mediterranean cone)).